We begin with the raw amino-acid sequence, 147 residues long: MISKWAKRFFQMAELVGSWSKDPSTQVGAVITKHNRIVSVGFNGYPHGVSDSADTDEREIKYLKTLHAEENAILFAKRDLEGCDIWVTHFPCPNCAAKIIQTGISKVYCPEQTEDFLSRWGEKIQVSQDMFSQAGVEVTWLPLDILK.

Residues 4 to 120 (KWAKRFFQMA…EQTEDFLSRW (117 aa)) enclose the CMP/dCMP-type deaminase domain. Histidine 67 is a Zn(2+) binding site. Residue glutamate 69 is the Proton donor of the active site. Zn(2+)-binding residues include cysteine 92 and cysteine 95.

It belongs to the cytidine and deoxycytidylate deaminase family. The cofactor is Zn(2+).

This is an uncharacterized protein from Aliivibrio fischeri (Vibrio fischeri).